Here is a 245-residue protein sequence, read N- to C-terminus: MALKFTTAEGQAITPITVPVMREIDRLAVQETGPNLYQMMENAGRNLAELTLTLLGESRNGSRVLVLAGTGGNGGGGLCAGRHLANHGLAVDYTLGDRDGLSEVTGRQLSLLELAGGREVDPVSPETGEADIVLDALIGYSLLGAPSGRSAELIRWLNAGNSRIISLDVPSGVDADSGLTPGEYVRPQTTLTLAWPKTGLLPRLTGELWLGDLGIPPAVYTRAGLKNFRSPFIAGYLVRLTASEQ.

Residues 21-221 enclose the YjeF N-terminal domain; the sequence is MREIDRLAVQ…DLGIPPAVYT (201 aa). 72-76 provides a ligand contact to (6S)-NADPHX; it reads GNGGG. Residues N73 and D135 each contribute to the K(+) site. Residues 139-145 and D168 each bind (6S)-NADPHX; that span reads GYSLLGA. S171 serves as a coordination point for K(+).

The protein belongs to the NnrE/AIBP family. K(+) is required as a cofactor.

It carries out the reaction (6R)-NADHX = (6S)-NADHX. It catalyses the reaction (6R)-NADPHX = (6S)-NADPHX. Its function is as follows. Catalyzes the epimerization of the S- and R-forms of NAD(P)HX, a damaged form of NAD(P)H that is a result of enzymatic or heat-dependent hydration. This is a prerequisite for the S-specific NAD(P)H-hydrate dehydratase to allow the repair of both epimers of NAD(P)HX. This Dehalogenimonas lykanthroporepellens (strain ATCC BAA-1523 / JCM 15061 / BL-DC-9) protein is NAD(P)H-hydrate epimerase.